The primary structure comprises 195 residues: Imidazoleglycerol-phosphate dehydratase (195 aa).

It belongs to the imidazoleglycerol-phosphate dehydratase family.

It localises to the cytoplasm. It catalyses the reaction D-erythro-1-(imidazol-4-yl)glycerol 3-phosphate = 3-(imidazol-4-yl)-2-oxopropyl phosphate + H2O. It participates in amino-acid biosynthesis; L-histidine biosynthesis; L-histidine from 5-phospho-alpha-D-ribose 1-diphosphate: step 6/9. The chain is Imidazoleglycerol-phosphate dehydratase from Koribacter versatilis (strain Ellin345).